Consider the following 397-residue polypeptide: Bifunctional enzyme IspD/IspF (397 aa).

Residues 1–236 are 2-C-methyl-D-erythritol 4-phosphate cytidylyltransferase; it reads MSIAAIILAA…LKGMQIFPDI (236 aa). Positions 237-397 are 2-C-methyl-D-erythritol 2,4-cyclodiphosphate synthase; sequence RTGNGYDVHS…TVIYPGEIPK (161 aa). The a divalent metal cation site is built by Asp243 and His245. 4-CDP-2-C-methyl-D-erythritol 2-phosphate-binding positions include 243 to 245 and 269 to 270; these read DVH and HS. An a divalent metal cation-binding site is contributed by His277. Residues 291-293, 367-370, Phe374, and Arg377 contribute to the 4-CDP-2-C-methyl-D-erythritol 2-phosphate site; these read DIG and TTNE.

It in the N-terminal section; belongs to the IspD/TarI cytidylyltransferase family. IspD subfamily. The protein in the C-terminal section; belongs to the IspF family. A divalent metal cation serves as cofactor.

It catalyses the reaction 2-C-methyl-D-erythritol 4-phosphate + CTP + H(+) = 4-CDP-2-C-methyl-D-erythritol + diphosphate. The enzyme catalyses 4-CDP-2-C-methyl-D-erythritol 2-phosphate = 2-C-methyl-D-erythritol 2,4-cyclic diphosphate + CMP. It functions in the pathway isoprenoid biosynthesis; isopentenyl diphosphate biosynthesis via DXP pathway; isopentenyl diphosphate from 1-deoxy-D-xylulose 5-phosphate: step 2/6. Its pathway is isoprenoid biosynthesis; isopentenyl diphosphate biosynthesis via DXP pathway; isopentenyl diphosphate from 1-deoxy-D-xylulose 5-phosphate: step 4/6. Functionally, bifunctional enzyme that catalyzes the formation of 4-diphosphocytidyl-2-C-methyl-D-erythritol from CTP and 2-C-methyl-D-erythritol 4-phosphate (MEP) (IspD), and catalyzes the conversion of 4-diphosphocytidyl-2-C-methyl-D-erythritol 2-phosphate (CDP-ME2P) to 2-C-methyl-D-erythritol 2,4-cyclodiphosphate (ME-CPP) with a corresponding release of cytidine 5-monophosphate (CMP) (IspF). The chain is Bifunctional enzyme IspD/IspF from Bartonella bacilliformis (strain ATCC 35685 / KC583 / Herrer 020/F12,63).